Consider the following 274-residue polypeptide: Membrane protein insertase YidC 2 (274 aa).

The signal sequence occupies residues 1 to 20 (MKKKLKLTSLLGLSLLIMTA). C21 carries N-palmitoyl cysteine lipidation. The S-diacylglycerol cysteine moiety is linked to residue C21. 4 consecutive transmembrane segments (helical) span residues 56 to 76 (ISIGVGIILFTVLIRTVLLPV), 128 to 148 (SDSLWPILIQMPVILALFQAL), 167 to 187 (VDTTLVLPILAAVFTFLSTWL), and 205 to 225 (GIPVLIFIFAVYAPGGVALYW).

This sequence belongs to the OXA1/ALB3/YidC family. Type 2 subfamily.

The protein localises to the cell membrane. Required for the insertion and/or proper folding and/or complex formation of integral membrane proteins into the membrane. Involved in integration of membrane proteins that insert both dependently and independently of the Sec translocase complex, as well as at least some lipoproteins. The sequence is that of Membrane protein insertase YidC 2 from Streptococcus pneumoniae serotype 4 (strain ATCC BAA-334 / TIGR4).